Consider the following 235-residue polypeptide: Ornithine decarboxylase antizyme 3 (235 aa).

2 positions are modified to phosphoserine: S9 and S12.

The protein belongs to the ODC antizyme family. As to quaternary structure, interacts with ODC1 and thereby sterically blocks ODC homodimerization. Interacts with AZIN2; this interaction disrupts the interaction between the antizyme and ODC1. Interacts with GGN. Testis specific.

The protein resides in the nucleus. Its subcellular location is the cytoplasm. Its function is as follows. Ornithine decarboxylase (ODC) antizyme protein that negatively regulates ODC activity and intracellular polyamine biosynthesis and uptake in response to increased intracellular polyamine levels. Binds to ODC monomers, inhibiting the assembly of the functional ODC homodimers. Does not target the ODC monomers for degradation, which allows a protein synthesis-independent restoration of ODC activity. Stabilizes AZIN2 by interfering with its ubiquitination. Involved in the translocation of AZNI2 from ER-Golgi intermediate compartment (ERGIC) to the cytosol. Probably plays a key role in spermatogenesis by regulating the intracellular concentration of polyamines in haploid germ cells. This is Ornithine decarboxylase antizyme 3 (OAZ3) from Homo sapiens (Human).